Here is a 130-residue protein sequence, read N- to C-terminus: Small ribosomal subunit protein uS11 (130 aa).

This sequence belongs to the universal ribosomal protein uS11 family. As to quaternary structure, part of the 30S ribosomal subunit. Interacts with proteins S7 and S18. Binds to IF-3.

Located on the platform of the 30S subunit, it bridges several disparate RNA helices of the 16S rRNA. Forms part of the Shine-Dalgarno cleft in the 70S ribosome. The polypeptide is Small ribosomal subunit protein uS11 (Tropheryma whipplei (strain TW08/27) (Whipple's bacillus)).